Consider the following 461-residue polypeptide: GTPase Der (461 aa).

2 EngA-type G domains span residues 9-171 (KTIA…NLNK) and 200-371 (IQVG…ECFS). GTP is bound by residues 15–22 (GQPNVGKS), 62–66 (DTGGM), 123–126 (NKID), 206–213 (GRVNVGKS), 253–257 (DTAGI), and 317–320 (NKWD). Positions 372–456 (KRIPTSLLNS…PLILNAKDKK (85 aa)) constitute a KH-like domain.

Belongs to the TRAFAC class TrmE-Era-EngA-EngB-Septin-like GTPase superfamily. EngA (Der) GTPase family. Associates with the 50S ribosomal subunit.

Functionally, GTPase that plays an essential role in the late steps of ribosome biogenesis. The chain is GTPase Der from Helicobacter pylori (strain HPAG1).